A 70-amino-acid polypeptide reads, in one-letter code: Testis-expressed protein 53 (70 aa).

Expressed in Testis.

The protein is Testis-expressed protein 53 of Homo sapiens (Human).